We begin with the raw amino-acid sequence, 364 residues long: NAD(P)H-quinone oxidoreductase subunit 1, chloroplastic (364 aa).

6 consecutive transmembrane segments (helical) span residues 27–47 (IWLLVPIFTPVSGILIGVLVI), 98–118 (FSVGPSIAVISILLSYSVIPF), 127–147 (ISIGVFLWIAISSIAPIGLLM), 255–275 (GLFYVASYLNLLVSSLFVTVL), 301–321 (VFGSTIGILITLAKAYLFLFV), and 337–357 (LLNLGWKFLLPIALGNLLLTT).

The protein belongs to the complex I subunit 1 family. NDH is composed of at least 16 different subunits, 5 of which are encoded in the nucleus.

The protein resides in the plastid. It localises to the chloroplast thylakoid membrane. It catalyses the reaction a plastoquinone + NADH + (n+1) H(+)(in) = a plastoquinol + NAD(+) + n H(+)(out). The catalysed reaction is a plastoquinone + NADPH + (n+1) H(+)(in) = a plastoquinol + NADP(+) + n H(+)(out). Its function is as follows. NDH shuttles electrons from NAD(P)H:plastoquinone, via FMN and iron-sulfur (Fe-S) centers, to quinones in the photosynthetic chain and possibly in a chloroplast respiratory chain. The immediate electron acceptor for the enzyme in this species is believed to be plastoquinone. Couples the redox reaction to proton translocation, and thus conserves the redox energy in a proton gradient. This chain is NAD(P)H-quinone oxidoreductase subunit 1, chloroplastic, found in Illicium oligandrum (Star anise).